The chain runs to 155 residues: MQVQNIEGSLNASGLKFALVVSRFNDFIGQKLVEGAIDCIVRHGGSADEITVIRCPGAFELPSVTRKAMLSGKYDAIVTLGVIIRGSTPHFDVIAAEATKGIAQVGMEAAIPVSFGVLTTENLEQAIERAGTKAGNKGFDAALAAIEMANLYKQL.

Residues Phe-24, 58 to 60 (AFE), and 82 to 84 (VII) contribute to the 5-amino-6-(D-ribitylamino)uracil site. 87–88 (ST) lines the (2S)-2-hydroxy-3-oxobutyl phosphate pocket. The active-site Proton donor is His-90. Residue Phe-115 participates in 5-amino-6-(D-ribitylamino)uracil binding. A (2S)-2-hydroxy-3-oxobutyl phosphate-binding site is contributed by Arg-129.

This sequence belongs to the DMRL synthase family.

The catalysed reaction is (2S)-2-hydroxy-3-oxobutyl phosphate + 5-amino-6-(D-ribitylamino)uracil = 6,7-dimethyl-8-(1-D-ribityl)lumazine + phosphate + 2 H2O + H(+). It functions in the pathway cofactor biosynthesis; riboflavin biosynthesis; riboflavin from 2-hydroxy-3-oxobutyl phosphate and 5-amino-6-(D-ribitylamino)uracil: step 1/2. In terms of biological role, catalyzes the formation of 6,7-dimethyl-8-ribityllumazine by condensation of 5-amino-6-(D-ribitylamino)uracil with 3,4-dihydroxy-2-butanone 4-phosphate. This is the penultimate step in the biosynthesis of riboflavin. This Chlorobaculum tepidum (strain ATCC 49652 / DSM 12025 / NBRC 103806 / TLS) (Chlorobium tepidum) protein is 6,7-dimethyl-8-ribityllumazine synthase.